We begin with the raw amino-acid sequence, 332 residues long: Glycerol-3-phosphate dehydrogenase [NAD(P)+] (332 aa).

NADPH contacts are provided by serine 10, tryptophan 11, lysine 31, and lysine 105. The sn-glycerol 3-phosphate site is built by lysine 105, glycine 136, and serine 138. Alanine 140 contacts NADPH. Sn-glycerol 3-phosphate contacts are provided by lysine 191, aspartate 244, serine 254, arginine 255, and asparagine 256. Lysine 191 serves as the catalytic Proton acceptor. Arginine 255 is a binding site for NADPH. Positions 279 and 281 each coordinate NADPH.

The protein belongs to the NAD-dependent glycerol-3-phosphate dehydrogenase family.

The protein resides in the cytoplasm. It carries out the reaction sn-glycerol 3-phosphate + NAD(+) = dihydroxyacetone phosphate + NADH + H(+). It catalyses the reaction sn-glycerol 3-phosphate + NADP(+) = dihydroxyacetone phosphate + NADPH + H(+). It participates in membrane lipid metabolism; glycerophospholipid metabolism. In terms of biological role, catalyzes the reduction of the glycolytic intermediate dihydroxyacetone phosphate (DHAP) to sn-glycerol 3-phosphate (G3P), the key precursor for phospholipid synthesis. In Anaeromyxobacter sp. (strain K), this protein is Glycerol-3-phosphate dehydrogenase [NAD(P)+].